The sequence spans 440 residues: Chromosome partition protein MukF (440 aa).

A leucine-zipper region spans residues 208–236 (LSETSGTLRELQDTLEAAGDKLQANLLRI).

Belongs to the MukF family. As to quaternary structure, interacts, and probably forms a ternary complex, with MukE and MukB via its C-terminal region. The complex formation is stimulated by calcium or magnesium. It is required for an interaction between MukE and MukB.

The protein localises to the cytoplasm. Its subcellular location is the nucleoid. Involved in chromosome condensation, segregation and cell cycle progression. May participate in facilitating chromosome segregation by condensation DNA from both sides of a centrally located replisome during cell division. Not required for mini-F plasmid partitioning. Probably acts via its interaction with MukB and MukE. Overexpression results in anucleate cells. It has a calcium binding activity. The sequence is that of Chromosome partition protein MukF from Salmonella agona (strain SL483).